The primary structure comprises 710 residues: MASVISRAVRFHDDLEKEKLQEGEESHMEMRAYEMSSEYKHGKDAINKPSSNGRGLSRVFSEDYDAGEILVFDPRGPRINLWNKIFLAACLISLFVDPLFFYLPVAKKEKCIDMSIGLEVSLTIIRTFVDAFYIIHIYIRFQTAYIAPSSRVSGRGELIIDSSKIASNYMKKELWSDLVAALPLPQVLIWAVIPNIKGSEMIASRHVVRLVSIFQYLLRLYLIYPLSSKITKASGVMMEKAWAGAAYYLTLYMLASHVLGSTWYLLSIERQDECWKKACTLQYPHCQYHYLDCQSLSDPNRNAWLKSSNLSGLCDQNSHFFQFGIFDDAVTLEITSSNFLTKYYYCLWWGLRNLSSSGENLLTSTHVAEINFAVIVAILGLVLFALLIGNMQTYLQSTTIRLEEWRIRRTDTERWMHHRQLPHYLKENVRRHDQFRWVATRGVDEEAILRDLPVDLRRDIKRHLCLNLVRQVPLFDQMDDRMLDAICERLKPTLCTPGTCIVREGDPVDEMLFIVRGRLDSCTTNGGRTGFFNTCRIGSGDFCGEELLPWALDPRPTAVLPSSTRTVRAITEVEAFALIAEDLKFVAAQFRRLHSKQLRQTFRFYSHQWRTWAACFIQAAWFRYKRMKETNEVKEKENLMMMSNVKYYGNDDSQYFSAPLQVPKGSSYSMYSGKLVGSLRRGRSMRYGSELDMLGTLRKPIEPDFNDDGD.

Helical transmembrane passes span 85 to 105 (IFLA…YLPV), 115 to 135 (SIGL…FYII), 174 to 194 (LWSD…AVIP), 207 to 226 (VVRL…IYPL), 248 to 268 (YLTL…LLSI), and 368 to 388 (AEIN…ALLI). Residue 474-559 (LFDQMDDRML…WALDPRPTAV (86 aa)) coordinates a nucleoside 3',5'-cyclic phosphate.

It belongs to the cyclic nucleotide-gated cation channel (TC 1.A.1.5) family. In terms of assembly, interacts (via N-terminus) with DMI1 (via c-terminus). The Nod factor has no effect on this interaction, implying that the complex is maintained after activation. In terms of tissue distribution, expressed in roots, stems, leaves, flowers and pods.

It is found in the nucleus membrane. Functionally, cyclic nucleotide-gated channel involved in the establishment of both rhizobial and mycorrhizal associations. Required for full activation of nuclear-localized Ca(2+) oscillations by Nod and Myc factors. Simultaneous activation of the K(+)-permeable channel DMI1 and the Ca(2+) channel CNGC15 can give rise to sustained Ca(2+) oscillations. May function during fertilization in both female and male gametophytic Ca(2+) signaling. The protein is Protein CNGC15a of Medicago truncatula (Barrel medic).